A 355-amino-acid polypeptide reads, in one-letter code: Uroporphyrinogen decarboxylase (355 aa).

Substrate is bound by residues 27–31, aspartate 77, tyrosine 154, threonine 209, and histidine 327; that span reads RQAGR.

It belongs to the uroporphyrinogen decarboxylase family. Homodimer.

It localises to the cytoplasm. The enzyme catalyses uroporphyrinogen III + 4 H(+) = coproporphyrinogen III + 4 CO2. It functions in the pathway porphyrin-containing compound metabolism; protoporphyrin-IX biosynthesis; coproporphyrinogen-III from 5-aminolevulinate: step 4/4. Its function is as follows. Catalyzes the decarboxylation of four acetate groups of uroporphyrinogen-III to yield coproporphyrinogen-III. In Erwinia tasmaniensis (strain DSM 17950 / CFBP 7177 / CIP 109463 / NCPPB 4357 / Et1/99), this protein is Uroporphyrinogen decarboxylase.